The sequence spans 371 residues: Carlactonoate CLA methyltransferase (371 aa).

An S-adenosyl-L-homocysteine-binding site is contributed by Y21. Q28 contacts (11R)-carlactonoate. Residues C62, N67, D101, L102, S141, and F142 each coordinate S-adenosyl-L-homocysteine. (11R)-carlactonoate contacts are provided by H162 and W163. Residues N180, D266, Y268, and D269 each contribute to the Mg(2+) site.

This sequence belongs to the methyltransferase superfamily. Type-7 methyltransferase family. SABATH subfamily. In terms of assembly, homodimer. Mg(2+) is required as a cofactor.

It catalyses the reaction (11R)-carlactonoate + S-adenosyl-L-methionine = (11R)-methyl carlactonoate + S-adenosyl-L-homocysteine. Its function is as follows. Methyltransferase involved in the biosynthesis of strigolactone natural products, bioactive compounds promoting plant fitness and soil microbe interactions, but preventing shoot branching. Catalyzes the biosynthesis of (11R)-methyl carlactonoate (MeCLA) from (11R)-carlactonoate (CLA), downstream of MAX1; MeCLA is probably biologically active as a hormone regulating shoot branching and serves as a precursor of non-canonical strigolactones (SLs). This chain is Carlactonoate CLA methyltransferase, found in Arabidopsis thaliana (Mouse-ear cress).